Here is a 185-residue protein sequence, read N- to C-terminus: NEDD8-conjugating enzyme UBE2F (185 aa).

Met-1 carries the N-acetylmethionine modification. An interaction with UBA3 region spans residues 1–29; the sequence is MLTLASKLKRDDGLKGSRASATASDSTRR. Positions 32 to 185 constitute a UBC core domain; the sequence is VRDRLLVKEV…VEDYIKRYAR (154 aa). The active-site Glycyl thioester intermediate is Cys-116.

This sequence belongs to the ubiquitin-conjugating enzyme family. UBE2F subfamily. In terms of assembly, interacts with UBA3 and RBX2. Interacts (N-terminally acetylated form) with (via DCUN1 domain) DCUN1D1, DCUN1D2, DCUN1D3, DCUN1D4 and DCUN1D5. The acetylation of Met-1 increases affinity for DCUN1D3 by about 2 orders of magnitude and is crucial for NEDD8 transfer to cullins.

The catalysed reaction is [E1 NEDD8-activating enzyme]-S-[NEDD8 protein]-yl-L-cysteine + [E2 NEDD8-conjugating enzyme]-L-cysteine = [E1 NEDD8-activating enzyme]-L-cysteine + [E2 NEDD8-conjugating enzyme]-S-[NEDD8-protein]-yl-L-cysteine.. The protein operates within protein modification; protein neddylation. In terms of biological role, accepts the ubiquitin-like protein NEDD8 from the UBA3-NAE1 E1 complex and catalyzes its covalent attachment to other proteins. Together with the E3 ubiquitin ligase RNF7/RBX2, specifically neddylates cullin-5 (CUL5). Does not neddylate CUL1, CUL2, CUL3, CUL4A or CUL4B. Mediates neddylation of the CUL9-RBX1 complex. This chain is NEDD8-conjugating enzyme UBE2F (UBE2F), found in Bos taurus (Bovine).